Consider the following 428-residue polypeptide: Ectonucleoside triphosphate diphosphohydrolase 5 (428 aa).

The first 24 residues, 1 to 24, serve as a signal peptide directing secretion; the sequence is MTSSRLPVLLALVFSSLSPVLSHS. The Proton acceptor role is filled by E172. N232 carries N-linked (GlcNAc...) asparagine glycosylation. Cystine bridges form between C272/C303 and C363/C377.

The protein belongs to the GDA1/CD39 NTPase family. As to quaternary structure, monomer; active form. Homodimer; disulfide-linked. Homodimers are enzymatically inactive. The cofactor is Ca(2+). It depends on Mg(2+) as a cofactor.

The protein resides in the endoplasmic reticulum. Its subcellular location is the secreted. It catalyses the reaction a ribonucleoside 5'-diphosphate + H2O = a ribonucleoside 5'-phosphate + phosphate + H(+). The catalysed reaction is GDP + H2O = GMP + phosphate + H(+). It carries out the reaction UDP + H2O = UMP + phosphate + H(+). The enzyme catalyses IDP + H2O = IMP + phosphate + H(+). It catalyses the reaction CDP + H2O = CMP + phosphate + H(+). The catalysed reaction is ADP + H2O = AMP + phosphate + H(+). Its pathway is protein modification; protein glycosylation. Functionally, hydrolyzes nucleoside diphosphates with a preference for GDP, IDP and UDP compared to ADP and CDP. In the lumen of the endoplasmic reticulum, hydrolyzes UDP that acts as an end-product feedback inhibitor of the UDP-Glc:glycoprotein glucosyltransferases. UMP can be transported back by an UDP-sugar antiporter to the cytosol where it is consumed to regenerate UDP-glucose. Therefore, it positively regulates protein reglucosylation by clearing UDP from the ER lumen and by promoting the regeneration of UDP-glucose. Protein reglucosylation is essential to proper glycoprotein folding and quality control in the ER. This Gallus gallus (Chicken) protein is Ectonucleoside triphosphate diphosphohydrolase 5 (ENTPD5).